Here is a 263-residue protein sequence, read N- to C-terminus: Dihydromethanophenazine:CoB--CoM heterodisulfide reductase subunit E (263 aa).

Transmembrane regions (helical) follow at residues 18–38 (TFVQ…YGLI), 108–128 (VMHL…GMMF), 150–170 (FLSI…LVAL), 184–204 (IMYD…GFIA), and 221–241 (VAPP…IAFI).

The protein belongs to the HdrE family. In terms of assembly, the dihydromethanophenazine:CoB--CoM heterodisulfide reductase is composed of two subunits; HdrD and HdrE. Requires heme b as cofactor.

It is found in the cell membrane. The enzyme catalyses methanophenazine + coenzyme B + coenzyme M = dihydromethanophenazine + coenzyme M-coenzyme B heterodisulfide. The protein operates within cofactor metabolism; coenzyme M-coenzyme B heterodisulfide reduction; coenzyme B and coenzyme M from coenzyme M-coenzyme B heterodisulfide: step 1/1. Functionally, part of a complex that catalyzes the reversible reduction of CoM-S-S-CoB to the thiol-coenzymes H-S-CoM (coenzyme M) and H-S-CoB (coenzyme B). HdrE may be responsible for anchoring the complex to the membrane. This Methanosarcina barkeri (strain Fusaro / DSM 804) protein is Dihydromethanophenazine:CoB--CoM heterodisulfide reductase subunit E (hdrE).